The sequence spans 251 residues: MRQALVMGNWKLNATKGSVEALINGLVDAAKDNATVEVAVCPPAVFIPQVEALTADTAITYGAQDCDVNTSGAFTGENSAVMLKEFGCKYTLVGHSERRVIHGESSEVVADKFAVTPENGLVPVLCIGETLEQFEAGETKAVVEAQLQAVVTKSGITSLNNAVIGYEPVWAIGTGKTATPEIAQEIPAHIRSWLAEQDAAVANKVQILYGGSVKPANSAELFGQADIDGGLVGGASLDAVEFSKVISGASA.

9 to 11 (NWK) provides a ligand contact to substrate. The active-site Electrophile is the His95. Catalysis depends on Glu167, which acts as the Proton acceptor. Substrate contacts are provided by residues Gly173, Ser212, and 233–234 (GG).

It belongs to the triosephosphate isomerase family. In terms of assembly, homodimer.

The protein localises to the cytoplasm. The enzyme catalyses D-glyceraldehyde 3-phosphate = dihydroxyacetone phosphate. The protein operates within carbohydrate biosynthesis; gluconeogenesis. Its pathway is carbohydrate degradation; glycolysis; D-glyceraldehyde 3-phosphate from glycerone phosphate: step 1/1. Functionally, involved in the gluconeogenesis. Catalyzes stereospecifically the conversion of dihydroxyacetone phosphate (DHAP) to D-glyceraldehyde-3-phosphate (G3P). This chain is Triosephosphate isomerase, found in Vibrio sp. (strain ANT-300).